A 172-amino-acid polypeptide reads, in one-letter code: Dual-action ribosomal maturation protein DarP (172 aa).

The protein belongs to the DarP family.

It localises to the cytoplasm. In terms of biological role, member of a network of 50S ribosomal subunit biogenesis factors which assembles along the 30S-50S interface, preventing incorrect 23S rRNA structures from forming. Promotes peptidyl transferase center (PTC) maturation. In Azotobacter vinelandii (strain DJ / ATCC BAA-1303), this protein is Dual-action ribosomal maturation protein DarP.